The primary structure comprises 348 residues: Cuticle collagen rol-6 (348 aa).

Positions 76–348 (GYGATGVQPP…SARRHRKFQL (273 aa)) are disordered. Residues 120 to 137 (PGGGFPDGPFPNGGGPRG) show a composition bias toward gly residues. Triple-helical region stretches follow at residues 152-178 (GPAG…DGKD), 196-258 (GPLG…DGER), 261-284 (GRPG…TGRD), and 288-323 (GQSG…PGKD). The segment covering 194 to 231 (PQGPLGPQGPNGAPGLRGMRGARGQPGRPGRDGNPGMP) has biased composition (low complexity). Over residues 297–306 (GLQGYGGAAG) the composition is skewed to gly residues. Residues 322-338 (KDAEYCKCPGREGDAGR) are compositionally biased toward basic and acidic residues. The span at 339-348 (SARRHRKFQL) shows a compositional bias: basic residues.

Belongs to the cuticular collagen family. Collagen polypeptide chains are complexed within the cuticle by disulfide bonds and other types of covalent cross-links. In terms of tissue distribution, localizes in stripes along the alae.

In terms of biological role, nematode cuticles are composed largely of collagen-like proteins. The cuticle functions both as an exoskeleton and as a barrier to protect the worm from its environment. May play a role in cuticle remodeling in response to the environment. Involved in body morphogenesis. This chain is Cuticle collagen rol-6 (rol-6), found in Caenorhabditis elegans.